A 329-amino-acid polypeptide reads, in one-letter code: Sialic acid-binding periplasmic protein SiaP (329 aa).

The signal sequence occupies residues 1–23; that stretch reads MMKLTKLFLATAISLGVSSAVLA. Residues N33, D72, E90, R150, R170, and N210 each coordinate N-acetyl-beta-neuraminate.

This sequence belongs to the bacterial solute-binding protein 7 family. In terms of assembly, the complex comprises the extracytoplasmic solute receptor protein SiaP, and the fused transmembrane protein SiaT.

It is found in the periplasm. Functionally, part of the tripartite ATP-independent periplasmic (TRAP) transport system SiaPT involved in the uptake of sialic acid (N-acetyl-beta-neuraminate). This protein specifically binds sialic acid with high affinity. N-Acetylneuraminate (sialic acid) can then be incorporated into the lipooligosaccharides (LOS) as a terminal non-reducing sugar, protecting the bacterium from complement-mediated killing by normal human serum. The chain is Sialic acid-binding periplasmic protein SiaP (siaP) from Haemophilus influenzae (strain ATCC 51907 / DSM 11121 / KW20 / Rd).